A 259-amino-acid polypeptide reads, in one-letter code: Proteasome subunit alpha (259 aa).

The protein belongs to the peptidase T1A family. As to quaternary structure, the 20S proteasome core is composed of 14 alpha and 14 beta subunits that assemble into four stacked heptameric rings, resulting in a barrel-shaped structure. The two inner rings, each composed of seven catalytic beta subunits, are sandwiched by two outer rings, each composed of seven alpha subunits. The catalytic chamber with the active sites is on the inside of the barrel. Has a gated structure, the ends of the cylinder being occluded by the N-termini of the alpha-subunits. Is capped at one or both ends by the proteasome regulatory ATPase, PAN.

The protein localises to the cytoplasm. Its activity is regulated as follows. The formation of the proteasomal ATPase PAN-20S proteasome complex, via the docking of the C-termini of PAN into the intersubunit pockets in the alpha-rings, triggers opening of the gate for substrate entry. Interconversion between the open-gate and close-gate conformations leads to a dynamic regulation of the 20S proteasome proteolysis activity. In terms of biological role, component of the proteasome core, a large protease complex with broad specificity involved in protein degradation. The protein is Proteasome subunit alpha of Methanococcus vannielii (strain ATCC 35089 / DSM 1224 / JCM 13029 / OCM 148 / SB).